A 34-amino-acid polypeptide reads, in one-letter code: Jingzhaotoxin F7-10.36 (34 aa).

Intrachain disulfides connect cysteine 2/cysteine 17, cysteine 9/cysteine 22, and cysteine 16/cysteine 29.

The protein belongs to the neurotoxin 10 (Hwtx-1) family. 50 (Jztz-F7) subfamily. In terms of tissue distribution, expressed by the venom gland.

The protein resides in the secreted. Its function is as follows. Probable ion channel inhibitor. The sequence is that of Jingzhaotoxin F7-10.36 from Chilobrachys guangxiensis (Chinese earth tiger tarantula).